A 122-amino-acid polypeptide reads, in one-letter code: Crustacean hyperglycemic hormones 7 (122 aa).

The signal sequence occupies residues methionine 1–alanine 26. 3 disulfide bridges follow: cysteine 55–cysteine 91, cysteine 71–cysteine 87, and cysteine 74–cysteine 100. At valine 120 the chain carries Valine amide.

This sequence belongs to the arthropod CHH/MIH/GIH/VIH hormone family. In terms of tissue distribution, produced by the medulla terminalis X-organ in the eyestalks and transported to the sinus gland where they are stored and released.

It is found in the secreted. Functionally, hormone found in the sinus gland of isopods and decapods which controls the blood sugar level. Has a secretagogue action over the amylase released from the midgut gland. May act as a stress hormone and may be involved in the control of molting and reproduction. This Penaeus japonicus (Kuruma prawn) protein is Crustacean hyperglycemic hormones 7.